A 395-amino-acid chain; its full sequence is Digeranylgeranylglycerophospholipid reductase (395 aa).

Residues Ala15, Asp34, Cys45, Ala46, Gly48, Arg97, Ala121, Asp276, and Gly288 each contribute to the FAD site. A 2,3-bis-O-(geranylgeranyl)-sn-glycerol 1-phospholipid contacts are provided by Arg329 and Gly365.

Belongs to the geranylgeranyl reductase family. DGGGPL reductase subfamily. Requires FAD as cofactor.

It catalyses the reaction a 2,3-bis-O-phytanyl-sn-glycerol 1-phospholipid + 8 A = a 2,3-bis-O-(geranylgeranyl)-sn-glycerol 1-phospholipid + 8 AH2. It carries out the reaction 2,3-bis-O-(phytanyl)-sn-glycerol 1-phosphate + 8 A = 2,3-bis-O-(geranylgeranyl)-sn-glycerol 1-phosphate + 8 AH2. The enzyme catalyses CDP-2,3-bis-O-(geranylgeranyl)-sn-glycerol + 8 AH2 = CDP-2,3-bis-O-(phytanyl)-sn-glycerol + 8 A. The catalysed reaction is archaetidylserine + 8 AH2 = 2,3-bis-O-phytanyl-sn-glycero-3-phospho-L-serine + 8 A. It participates in membrane lipid metabolism; glycerophospholipid metabolism. In terms of biological role, is involved in the reduction of 2,3-digeranylgeranylglycerophospholipids (unsaturated archaeols) into 2,3-diphytanylglycerophospholipids (saturated archaeols) in the biosynthesis of archaeal membrane lipids. Catalyzes the formation of archaetidic acid (2,3-di-O-phytanyl-sn-glyceryl phosphate) from 2,3-di-O-geranylgeranylglyceryl phosphate (DGGGP) via the hydrogenation of each double bond of the isoprenoid chains. Is also probably able to reduce double bonds of geranyl groups in CDP-2,3-bis-O-(geranylgeranyl)-sn-glycerol and archaetidylserine, thus acting at various stages in the biosynthesis of archaeal membrane lipids. The polypeptide is Digeranylgeranylglycerophospholipid reductase (Thermococcus gammatolerans (strain DSM 15229 / JCM 11827 / EJ3)).